Here is an 858-residue protein sequence, read N- to C-terminus: MKKQFNRMKQLANQTVGRAEKTEVLSEDLLQIERRLDTVRSMCHHSHKRLIACFQGQHGTDAERRHKKLPLTALAQNMQEASAQLEESLLGKMLETCGDAENQLAFELSQHEVFVEKEIMDPLYGIAEVEIPNIQKQRKQLARLVLDWDSVRARWNQAHKSSGTNFQGLPSKIDTLKEEMDEAGNKVEQCKDQLAADMYNFMAKEGEYGKFFVTLLEAQADYHRKALAVLEKALPEMRAHQDKWAEKPAFGTPLEEHLKRSGREIALPIEACVMLLLETGMKEEGLFRIGAGASKLKKLKAALDCSTSHLDEFYSDPHAVAGALKSYLRELPEPLMTFSLYEEWTQVASVQDQDKKLQYLWTTCQKLPPQNFVNFRYLIKFLAKLAQTSDVNKMTPSNIAIVLGPNLLWAKQEGTLAEIAAATSVHVVAVIEPIIQHADWFFPGEVEFNVSEAFVPLATPNSNHSSHTGNDSDSGTLERKRPASMAVMEGDLVKKESFGVKLMDFQAHRRGGTLNRKHISPAFQPPLPPTDGNALAPAGPELPSQSSRADSNSVGGPVPSSSGILEQGLSPGDSSPPKPKDSVSAAAPVAGRNSNQITTVPNQAQTGGNSHQLSVGTAHSAAGPSPHTLRRAVKKPAPAPPKPGNPPPGHPGGQSSPGTGTSPKPSTRSPSPPQQQQQQQQQQQQQQQQQQQQQQQQQQQQQTPGMRRCSSSLPPIQAPNHPPPQPPTQPRLGEQGPEPGPTPPQTPTPPSTPPPAKQNSSQSETTQLHGTLPRPRPVPKPRNRPSVPPPPNPPGTHMGDGGLTPSVPTASRIVTDTNSRVSESLRNIFPEIHSDLASKEVPGHILLDIDNDTESTAL.

In terms of domain architecture, BAR spans 14 to 246; sequence QTVGRAEKTE…MRAHQDKWAE (233 aa). One can recognise a Rho-GAP domain in the interval 252–442; that stretch reads TPLEEHLKRS…PIIQHADWFF (191 aa). The segment covering 459 to 475 has biased composition (polar residues); that stretch reads TPNSNHSSHTGNDSDSG. The disordered stretch occupies residues 459-482; sequence TPNSNHSSHTGNDSDSGTLERKRP. Ser484 is subject to Phosphoserine. The disordered stretch occupies residues 516-823; the sequence is RKHISPAFQP…VTDTNSRVSE (308 aa). The segment covering 543–552 has biased composition (polar residues); it reads PSQSSRADSN. The segment covering 553–563 has biased composition (low complexity); that stretch reads SVGGPVPSSSG. A Phosphoserine modification is found at Ser575. Residues 592–617 are compositionally biased toward polar residues; the sequence is RNSNQITTVPNQAQTGGNSHQLSVGT. Positions 637–650 are enriched in pro residues; that stretch reads APAPPKPGNPPPGH. The segment covering 653–702 has biased composition (low complexity); sequence GQSSPGTGTSPKPSTRSPSPPQQQQQQQQQQQQQQQQQQQQQQQQQQQQQ. A phosphoserine mark is found at Ser710 and Ser712. Composition is skewed to pro residues over residues 716–729 and 738–756; these read IQAP…PPTQ and EPGP…PPPA. Residues Thr742, Thr746, and Thr748 each carry the phosphothreonine modification. An SH3-binding motif is present at residues 742–755; sequence TPPQTPTPPSTPPP. The residue at position 751 (Ser751) is a Phosphoserine. The residue at position 752 (Thr752) is a Phosphothreonine. Over residues 757 to 769 the composition is skewed to polar residues; that stretch reads KQNSSQSETTQLH. Positions 784–794 are enriched in pro residues; it reads RPSVPPPPNPP. The segment covering 806 to 823 has biased composition (polar residues); that stretch reads SVPTASRIVTDTNSRVSE.

Component of a complex whose core is composed of ARHGAP17, AMOT, PALS1, PATJ and PARD3/PAR3. Interacts with NHERF1, FNBP1, TRIP10, CAPZA (CAPZA1, CAPZA2 or CAPZA3), CAPZB, CD2AP and SH3KBP1/CIN85. As to expression, highly expressed in brain; neuron-specific (at protein level). Isoform 2, isoform 3 and isoform 4 are predominantly expressed in neuronal tissues and correlate well with the differentiation of neurons, while isoform 1 is strongly expressed in embryonic brain.

The protein localises to the membrane. It localises to the cytoplasm. Its subcellular location is the cell junction. The protein resides in the tight junction. Rho GTPase-activating protein involved in the maintenance of tight junction by regulating the activity of CDC42, thereby playing a central role in apical polarity of epithelial cells. Specifically acts as a GTPase activator for the CDC42 GTPase by converting it to an inactive GDP-bound state. The complex formed with AMOT acts by regulating the uptake of polarity proteins at tight junctions, possibly by deciding whether tight junction transmembrane proteins are recycled back to the plasma membrane or sent elsewhere. Participates in the Ca(2+)-dependent regulation of exocytosis, possibly by catalyzing GTPase activity of Rho family proteins and by inducing the reorganization of the cortical actin filaments. Acts as a GTPase activator in vitro for RAC1. This is Rho GTPase-activating protein 17 (Arhgap17) from Rattus norvegicus (Rat).